The primary structure comprises 559 residues: T-complex protein 1 subunit gamma (559 aa).

Cys-369 and Cys-375 are disulfide-bonded. The tract at residues 537 to 559 is disordered; it reads GGASVTDGNGQEIPETFGDARDG.

This sequence belongs to the TCP-1 chaperonin family. In terms of assembly, heterooligomeric complex of about 850 to 900 kDa that forms two stacked rings, 12 to 16 nm in diameter.

It localises to the cytoplasm. Its function is as follows. Molecular chaperone; assists the folding of proteins upon ATP hydrolysis. Known to play a role, in vitro, in the folding of actin and tubulin. The polypeptide is T-complex protein 1 subunit gamma (Tetrahymena pyriformis).